Here is a 261-residue protein sequence, read N- to C-terminus: Small ribosomal subunit protein uS2 (261 aa).

It belongs to the universal ribosomal protein uS2 family.

This Streptococcus mutans serotype c (strain ATCC 700610 / UA159) protein is Small ribosomal subunit protein uS2.